The following is an 815-amino-acid chain: G-type lectin S-receptor-like serine/threonine-protein kinase SD1-1 (815 aa).

An N-terminal signal peptide occupies residues 1–22; it reads MREIHSLFSLSLFLISSSLSVA. Residues 23 to 438 lie on the Extracellular side of the membrane; the sequence is LDYNVITPKE…FAKIEFKGRE (416 aa). The Bulb-type lectin domain maps to 25–152; it reads YNVITPKEFL…EEAVLWQSFD (128 aa). Asn-93, Asn-249, and Asn-265 each carry an N-linked (GlcNAc...) asparagine glycan. Residues 288–326 form the EGF-like domain; the sequence is PEDECDYYSICGAYAVCGINSKNTPSCSCLQGFKPKSGR. 2 cysteine pairs are disulfide-bonded: Cys-292-Cys-304 and Cys-298-Cys-314. 2 N-linked (GlcNAc...) asparagine glycosylation sites follow: Asn-329 and Asn-385. One can recognise a PAN domain in the interval 345–428; the sequence is CEKKDAFVKF…FGQDVYIRMG (84 aa). Intrachain disulfides connect Cys-378–Cys-403 and Cys-382–Cys-388. The chain crosses the membrane as a helical span at residues 439–459; that stretch reads VVGMVVGSVVAIAVVLVVVFA. Topologically, residues 460–815 are cytoplasmic; sequence CFRKKIMKRY…EVSITMLQGR (356 aa). The Protein kinase domain occupies 500–783; the sequence is FSYVNFLGRG…SDSSLPHPTQ (284 aa). ATP contacts are provided by residues 506 to 514 and Lys-528; that span reads LGRGGFGPV. A Phosphoserine modification is found at Ser-534. A caM-binding region spans residues 589-606; that stretch reads RRSTELDWKKRMNIINGV. The Proton acceptor role is filled by Asp-625. Ser-642 bears the Phosphoserine mark. Thr-659 carries the phosphothreonine modification. Residues Ser-797 and Ser-803 each carry the phosphoserine modification. Thr-810 bears the Phosphothreonine mark.

This sequence belongs to the protein kinase superfamily. Ser/Thr protein kinase family. In terms of assembly, interacts with PUB9, PUB13 and PUB14.

It localises to the cell membrane. It carries out the reaction L-seryl-[protein] + ATP = O-phospho-L-seryl-[protein] + ADP + H(+). The enzyme catalyses L-threonyl-[protein] + ATP = O-phospho-L-threonyl-[protein] + ADP + H(+). This chain is G-type lectin S-receptor-like serine/threonine-protein kinase SD1-1 (SD11), found in Arabidopsis thaliana (Mouse-ear cress).